Consider the following 952-residue polypeptide: UvrABC system protein A (952 aa).

38-45 contributes to the ATP binding site; that stretch reads GLSGSGKS. The segment at 258 to 285 adopts a C4-type zinc-finger fold; it reads CNECGFSIPELEPRFFSFNSPVGACKSC. ABC transporter domains are found at residues 315-596 and 616-945; these read FRSV…KKSI and GNGK…LFLE. 648–655 lines the ATP pocket; that stretch reads GVSGSGKS. The C4-type zinc finger occupies 747–773; that stretch reads CENCSGDGLIKIEMHFLPDVFVKCESC.

This sequence belongs to the ABC transporter superfamily. UvrA family. As to quaternary structure, forms a heterotetramer with UvrB during the search for lesions.

The protein localises to the cytoplasm. Its function is as follows. The UvrABC repair system catalyzes the recognition and processing of DNA lesions. UvrA is an ATPase and a DNA-binding protein. A damage recognition complex composed of 2 UvrA and 2 UvrB subunits scans DNA for abnormalities. When the presence of a lesion has been verified by UvrB, the UvrA molecules dissociate. The sequence is that of UvrABC system protein A from Malacoplasma penetrans (strain HF-2) (Mycoplasma penetrans).